We begin with the raw amino-acid sequence, 456 residues long: Ribosome assembly protein METTL17, mitochondrial (456 aa).

The transit peptide at 1–19 (MAAALKCLLTLGRWCPGLG) directs the protein to the mitochondrion. [4Fe-4S] cluster-binding residues include C333, C339, C347, and C404.

It belongs to the methyltransferase superfamily. Rsm22 family. As to quaternary structure, associates with the mitochondrial ribosome (mitoribosome).

The protein localises to the mitochondrion matrix. Its function is as follows. Mitochondrial ribosome (mitoribosome) assembly factor. Binds at the interface of the head and body domains of the mitochondrial small ribosomal subunit (mt-SSU), occluding the mRNA channel and preventing compaction of the head domain towards the body. Probable inactive methyltransferase: retains the characteristic folding and ability to bind S-adenosyl-L-methionine, but it probably lost its methyltransferase activity. The protein is Ribosome assembly protein METTL17, mitochondrial of Homo sapiens (Human).